The primary structure comprises 201 residues: 3-isopropylmalate dehydratase small subunit (201 aa).

It belongs to the LeuD family. LeuD type 1 subfamily. In terms of assembly, heterodimer of LeuC and LeuD.

It catalyses the reaction (2R,3S)-3-isopropylmalate = (2S)-2-isopropylmalate. The protein operates within amino-acid biosynthesis; L-leucine biosynthesis; L-leucine from 3-methyl-2-oxobutanoate: step 2/4. Its function is as follows. Catalyzes the isomerization between 2-isopropylmalate and 3-isopropylmalate, via the formation of 2-isopropylmaleate. In Ruegeria sp. (strain TM1040) (Silicibacter sp.), this protein is 3-isopropylmalate dehydratase small subunit.